Consider the following 345-residue polypeptide: N-acetyl-gamma-glutamyl-phosphate reductase (345 aa).

Cysteine 149 is an active-site residue.

Belongs to the NAGSA dehydrogenase family. Type 1 subfamily.

The protein localises to the cytoplasm. It catalyses the reaction N-acetyl-L-glutamate 5-semialdehyde + phosphate + NADP(+) = N-acetyl-L-glutamyl 5-phosphate + NADPH + H(+). It functions in the pathway amino-acid biosynthesis; L-arginine biosynthesis; N(2)-acetyl-L-ornithine from L-glutamate: step 3/4. Its function is as follows. Catalyzes the NADPH-dependent reduction of N-acetyl-5-glutamyl phosphate to yield N-acetyl-L-glutamate 5-semialdehyde. This chain is N-acetyl-gamma-glutamyl-phosphate reductase, found in Bacillus cereus (strain B4264).